Consider the following 258-residue polypeptide: U6 snRNA phosphodiesterase 1 (258 aa).

The segment at 1-20 is disordered; the sequence is MALVDYGGSSSSASEDEDCT. Catalysis depends on His117, which acts as the Proton acceptor. AMP-binding positions include 117–119, Tyr200, and 202–208; these read HLS and PASFHVS. Residues Tyr200 and 204 to 208 each bind UMP; that span reads SFHVS. His206 functions as the Proton donor in the catalytic mechanism.

The protein belongs to the 2H phosphoesterase superfamily. USB1 family.

The protein localises to the nucleus. The enzyme catalyses a 3'-end uridylyl-uridine-RNA = a 3'-end 2',3'-cyclophospho-uridine-RNA + uridine. In terms of biological role, 3'-5' RNA exonuclease that trims the 3' end of oligo(U) tracts of the pre-U6 small nuclear RNA (snRNA) molecule, leading to the formation of a mature U6 snRNA 3' end-terminated with a 2',3'-cyclic phosphate. Participates in the U6 snRNA 3' end processing that prevents U6 snRNA degradation. This chain is U6 snRNA phosphodiesterase 1, found in Drosophila melanogaster (Fruit fly).